The sequence spans 180 residues: MTTTEFPSAVAKARFVRVSPRKARRVIDLVRGRSVTDALDILRWAPQAASEPVAKVIASAAANAQNNNGLDPATLVVATVYADEGPTAKRIRPRAQGRAFRIRKRTSHITVVVESRPAKDQRSAKSSRTRRAEASKAAAKAPAKKAPAKKAPAKKAPAKTAAKKTPAKTSETSDAKGGSD.

The tract at residues 111-180 is disordered; it reads VVVESRPAKD…ETSDAKGGSD (70 aa). A compositionally biased stretch (basic residues) spans 142–166; it reads PAKKAPAKKAPAKKAPAKTAAKKTP. The span at 171-180 shows a compositional bias: basic and acidic residues; it reads ETSDAKGGSD.

The protein belongs to the universal ribosomal protein uL22 family. Part of the 50S ribosomal subunit.

Its function is as follows. This protein binds specifically to 23S rRNA; its binding is stimulated by other ribosomal proteins, e.g. L4, L17, and L20. It is important during the early stages of 50S assembly. It makes multiple contacts with different domains of the 23S rRNA in the assembled 50S subunit and ribosome. The globular domain of the protein is located near the polypeptide exit tunnel on the outside of the subunit, while an extended beta-hairpin is found that lines the wall of the exit tunnel in the center of the 70S ribosome. The protein is Large ribosomal subunit protein uL22 of Mycobacterium avium (strain 104).